The primary structure comprises 204 residues: VQ motif-containing protein 13 (204 aa).

The segment covering 1 to 12 (MEKSPRYRDKAK) has biased composition (basic and acidic residues). Residues 1–26 (MEKSPRYRDKAKNLLPSPSSCTTTPT) form a disordered region. Residues 16-26 (PSPSSCTTTPT) show a composition bias toward low complexity. A Phosphoserine modification is found at S17. The short motif at 46–55 (FKQVVQLLTG) is the VQ element. A disordered region spans residues 56-90 (IPKNPTHQPDPRFPPFHSIPPIKAVTNKKQSSSFR). A phosphoserine mark is found at S73 and S128. A Phosphothreonine modification is found at T131. The segment at 133–204 (LMSDPFYRPG…HSPAPSPHDH (72 aa)) is disordered. Low complexity predominate over residues 143-152 (SFSQSPSDSK). Phosphoserine occurs at positions 147 and 173. 2 positions are modified to phosphothreonine: T177 and T192. 2 positions are modified to phosphoserine: S196 and S200.

In terms of processing, phosphorylated on serine and threonine residues by MPK6.

It localises to the nucleus. May modulate WRKY transcription factor activities. The sequence is that of VQ motif-containing protein 13 from Arabidopsis thaliana (Mouse-ear cress).